A 420-amino-acid polypeptide reads, in one-letter code: F-box/LRR-repeat protein At2g43260 (420 aa).

Residues 7 to 53 enclose the F-box domain; that stretch reads NPNSIDILPELLEEVLLRLPTKSILKCRIVSKQWRSLLESSRFAERH. LRR repeat units lie at residues 112–135 and 226–251; these read QDWIIVLNPSTSQLRRFPSGLNHN and VYRILALDLHKEEFHKVPVPPTQITV.

This chain is F-box/LRR-repeat protein At2g43260, found in Arabidopsis thaliana (Mouse-ear cress).